A 792-amino-acid chain; its full sequence is Phenylalanine--tRNA ligase beta subunit (792 aa).

Residues 39-150 (APAFHKVVVA…PDAPVGTDFR (112 aa)) form the tRNA-binding domain. The B5 domain maps to 405-480 (PARDPIRLGL…RMYGYNRIAA (76 aa)). Mg(2+) is bound by residues D458, D464, E467, and E468. Residues 698–791 (SKYPPIRRDI…LENRFGARLR (94 aa)) enclose the FDX-ACB domain.

Belongs to the phenylalanyl-tRNA synthetase beta subunit family. Type 1 subfamily. As to quaternary structure, tetramer of two alpha and two beta subunits. It depends on Mg(2+) as a cofactor.

The protein localises to the cytoplasm. It catalyses the reaction tRNA(Phe) + L-phenylalanine + ATP = L-phenylalanyl-tRNA(Phe) + AMP + diphosphate + H(+). This chain is Phenylalanine--tRNA ligase beta subunit, found in Nitrosospira multiformis (strain ATCC 25196 / NCIMB 11849 / C 71).